We begin with the raw amino-acid sequence, 470 residues long: Cannabinoid receptor 1 (470 aa).

Residues 1–121 (MKSILDGLAD…TPSQQLVIAA (121 aa)) lie on the Extracellular side of the membrane. The tract at residues 2 to 23 (KSILDGLADTTFRTITTDLLYL) is required for mitochondrial localization. N-linked (GlcNAc...) asparagine glycans are attached at residues Asn-78 and Asn-84. Residues 122 to 142 (LSIILGTFTVLENMLVLVVIV) traverse the membrane as a helical segment. Residues 143-154 (QSRSLRCRPSYH) are Cytoplasmic-facing. Residues 155-175 (FIGSLAVADLLGSVIFVYSFV) traverse the membrane as a helical segment. The Extracellular portion of the chain corresponds to 176–187 (DFHVFHRKDSPN). A helical transmembrane segment spans residues 188–208 (VFLFKLGGVTASFTASVGSLF). The Cytoplasmic portion of the chain corresponds to 209-232 (LTAIDRYISIHRPMSYKRIVTRTK). A helical transmembrane segment spans residues 233–253 (AVIAFCMMWTIAIVIAVLPLF). Residues 254–277 (GWNCIKLRSVCSDIFPLIDETYLM) lie on the Extracellular side of the membrane. A helical transmembrane segment spans residues 278 to 298 (FWIGVTSVLLLFIVYAYMYIL). Topologically, residues 299–344 (WKAHNHAVRMLQRGTQKSIIVHTSEDGKVHITRPDQTRMDIRLAKT) are cytoplasmic. The chain crosses the membrane as a helical span at residues 345 to 365 (LVLILVVLIICWGPLMAIMVY). Over 366 to 377 (DVFGKINKTIKT) the chain is Extracellular. Asn-372 carries an N-linked (GlcNAc...) asparagine glycan. The chain crosses the membrane as a helical span at residues 378-398 (VFAFCSVLCLLNSTVNPIIYA). The Cytoplasmic portion of the chain corresponds to 399–470 (LRSKDLRNAF…VSTDTSAEAV (72 aa)). Cys-415 is lipidated: S-palmitoyl cysteine.

This sequence belongs to the G-protein coupled receptor 1 family. Post-translationally, palmitoylation at Cys-415 is important for recruitment at both plasma membrane and lipid rafts and association with G protein alpha subunits. As to expression, expressed in neurons, especially in the olfactory bulbs, telencephalic pallium, and hypothalamus and also in the midbrain and hindbrain (in the mesencephalic tegmentum and dorsolateral rhombencephalon). Expressed also in the spinal cord.

The protein localises to the cell membrane. It localises to the mitochondrion outer membrane. It is found in the cell projection. Its subcellular location is the axon. The protein resides in the presynapse. G-protein coupled receptor for cannabinoids. Mediates many cannabinoid-induced effects in the central nervous system (CNS), as well as in peripheral tissues. Regulates cellular respiration and energy production in response to cannabinoids. Signaling typically involves reduction in cyclic AMP. This chain is Cannabinoid receptor 1 (cnr1), found in Xenopus laevis (African clawed frog).